Here is a 206-residue protein sequence, read N- to C-terminus: Type III pantothenate kinase (206 aa).

5-12 (DIGNSTAK) is a binding site for ATP. Substrate-binding positions include Tyr67 and 72–75 (GVDR). Catalysis depends on Asp74, which acts as the Proton acceptor. Asp89 contributes to the K(+) binding site. Ser92 is a binding site for ATP. A substrate-binding site is contributed by Thr144.

It belongs to the type III pantothenate kinase family. In terms of assembly, homodimer. NH4(+) is required as a cofactor. Requires K(+) as cofactor.

It is found in the cytoplasm. The enzyme catalyses (R)-pantothenate + ATP = (R)-4'-phosphopantothenate + ADP + H(+). Its pathway is cofactor biosynthesis; coenzyme A biosynthesis; CoA from (R)-pantothenate: step 1/5. In terms of biological role, catalyzes the phosphorylation of pantothenate (Pan), the first step in CoA biosynthesis. This Campylobacter hominis (strain ATCC BAA-381 / DSM 21671 / CCUG 45161 / LMG 19568 / NCTC 13146 / CH001A) protein is Type III pantothenate kinase.